Here is a 2181-residue protein sequence, read N- to C-terminus: Non-reducing polyketide synthase subA (2181 aa).

Residues 74–180 (QWVKGNSTQP…LALCCGAYID (107 aa)) form an N-terminal acylcarrier protein transacylase domain (SAT) region. Residues 347 to 779 (QAQLLVLGPV…GTNAAMLVCQ (433 aa)) enclose the Ketosynthase family 3 (KS3) domain. Active-site for beta-ketoacyl synthase activity residues include cysteine 525, histidine 661, and histidine 702. A malonyl-CoA:ACP transacylase (MAT) domain region spans residues 891 to 1193 (VLAGQTGRRV…SFYPAALGEP (303 aa)). The active-site For acyl/malonyl transferase activity is serine 977. The interval 1269–1401 (VSLIGKTQNA…GVITLQEVYS (133 aa)) is N-terminal hotdog fold. The 311-residue stretch at 1269-1579 (VSLIGKTQNA…FQKIAISSLK (311 aa)) folds into the PKS/mFAS DH domain. The tract at residues 1276–1573 (QNAGVQTVEY…TILGAKFQKI (298 aa)) is product template (PT) domain. Positions 1425–1579 (SASVVQGDFI…FQKIAISSLK (155 aa)) are C-terminal hotdog fold. The interval 1652 to 1673 (ISGSSRSTSSSPPSLESRSQAM) is disordered. Over residues 1653–1670 (SGSSRSTSSSPPSLESRS) the composition is skewed to low complexity. In terms of domain architecture, Carrier spans 1677-1753 (EITEGAGSAL…TLFHTIFPQQ (77 aa)). Serine 1713 is modified (O-(pantetheine 4'-phosphoryl)serine). The methyltransferase (CMeT) domain stretch occupies residues 1982–2164 (EFMNCLFSYN…QSGFGHVDWT (183 aa)).

The protein operates within secondary metabolite biosynthesis; terpenoid biosynthesis. In terms of biological role, non-reducing polyketide synthase; part of the gene cluster that mediates the biosynthesis of the immunosuppressants subglutinols, meroterpenoids consisting of an alpha-pyrone (4-hydroxy-5,6-dimethyl-2-pyrone) moiety attached to a decalin core fused to a five-membered cyclic ether carrying a prenylside chain. The first step of the pathway is the synthesis of the alpha-pyrone moiety by the polyketide synthase subA via condensation of one acetyl-CoA starter unit with 3 malonyl-CoA units and 2 methylations. The alpha-pyrone is then combined with geranylgeranyl pyrophosphate (GGPP) formed by the GGPP synthase subD through the action of the prenyltransferase subC to yield a linear alpha-pyrone diterpenoid. Subsequent steps in the subglutinol biosynthetic pathway involve the decalin core formation, which is thought to be initiated by the epoxidation of the C10-C11 olefin by the FAD-dependent oxidoreductase subE. The following cyclization cascade would be catalyzed by the terpene cyclase subB. Lastly, the FAD-dependent dehydrogenase subF probably catalyzes the five-membered cyclic ether formation to complete the formation of subglutinol A. Subsequent redox reactions appear to give rise to subglutinol C and D, however, it remains unclear which enzymes are responsible for these transformations. SubD may have secondary function in the conversion of the identified subglutinols to subglutinol analog 45, which seems to be the major product of the cluster. The sequence is that of Non-reducing polyketide synthase subA from Metarhizium robertsii (strain ARSEF 23 / ATCC MYA-3075) (Metarhizium anisopliae (strain ARSEF 23)).